A 145-amino-acid chain; its full sequence is Large ribosomal subunit protein uL13 (145 aa).

Belongs to the universal ribosomal protein uL13 family. As to quaternary structure, part of the 50S ribosomal subunit.

Its function is as follows. This protein is one of the early assembly proteins of the 50S ribosomal subunit, although it is not seen to bind rRNA by itself. It is important during the early stages of 50S assembly. The polypeptide is Large ribosomal subunit protein uL13 (Staphylococcus epidermidis (strain ATCC 35984 / DSM 28319 / BCRC 17069 / CCUG 31568 / BM 3577 / RP62A)).